Reading from the N-terminus, the 101-residue chain is Small ribosomal subunit protein bS6 (101 aa).

This sequence belongs to the bacterial ribosomal protein bS6 family.

Functionally, binds together with bS18 to 16S ribosomal RNA. This is Small ribosomal subunit protein bS6 from Oleidesulfovibrio alaskensis (strain ATCC BAA-1058 / DSM 17464 / G20) (Desulfovibrio alaskensis).